The primary structure comprises 343 residues: Branched-chain-amino-acid aminotransferase (343 aa).

The residue at position 182 (K182) is an N6-(pyridoxal phosphate)lysine.

Belongs to the class-IV pyridoxal-phosphate-dependent aminotransferase family. Pyridoxal 5'-phosphate serves as cofactor.

The catalysed reaction is L-leucine + 2-oxoglutarate = 4-methyl-2-oxopentanoate + L-glutamate. It catalyses the reaction L-isoleucine + 2-oxoglutarate = (S)-3-methyl-2-oxopentanoate + L-glutamate. The enzyme catalyses L-valine + 2-oxoglutarate = 3-methyl-2-oxobutanoate + L-glutamate. Its pathway is amino-acid biosynthesis; L-isoleucine biosynthesis; L-isoleucine from 2-oxobutanoate: step 4/4. It participates in amino-acid biosynthesis; L-leucine biosynthesis; L-leucine from 3-methyl-2-oxobutanoate: step 4/4. It functions in the pathway amino-acid biosynthesis; L-valine biosynthesis; L-valine from pyruvate: step 4/4. Acts on leucine, isoleucine and valine. This chain is Branched-chain-amino-acid aminotransferase (ilvE), found in Haemophilus influenzae (strain ATCC 51907 / DSM 11121 / KW20 / Rd).